A 268-amino-acid chain; its full sequence is Ubiquinone biosynthesis protein COQ4 homolog, mitochondrial (268 aa).

Zn(2+) is bound by residues histidine 171, aspartate 172, histidine 175, and glutamate 187.

Belongs to the COQ4 family. As to quaternary structure, component of a multi-subunit COQ enzyme complex. The cofactor is Zn(2+).

It localises to the mitochondrion inner membrane. It carries out the reaction a 4-hydroxy-3-methoxy-5-(all-trans-polyprenyl)benzoate + H(+) = a 2-methoxy-6-(all-trans-polyprenyl)phenol + CO2. Its pathway is cofactor biosynthesis; ubiquinone biosynthesis. Its function is as follows. Lyase that catalyzes the C1-decarboxylation of 4-hydroxy-3-methoxy-5-(all-trans-polyprenyl)benzoic acid into 2-methoxy-6-(all-trans-polyprenyl)phenol during ubiquinone biosynthesis. The sequence is that of Ubiquinone biosynthesis protein COQ4 homolog, mitochondrial from Drosophila yakuba (Fruit fly).